The following is a 408-amino-acid chain: 1-deoxy-D-xylulose 5-phosphate reductoisomerase (408 aa).

NADPH is bound by residues threonine 26, glycine 27, serine 28, isoleucine 29, and asparagine 143. A 1-deoxy-D-xylulose 5-phosphate-binding site is contributed by lysine 144. Residue glutamate 145 coordinates NADPH. Aspartate 167 lines the Mn(2+) pocket. 1-deoxy-D-xylulose 5-phosphate-binding residues include serine 168, glutamate 169, serine 193, and histidine 216. Glutamate 169 serves as a coordination point for Mn(2+). Glycine 222 lines the NADPH pocket. 1-deoxy-D-xylulose 5-phosphate is bound by residues serine 229, asparagine 234, lysine 235, and glutamate 238. Mn(2+) is bound at residue glutamate 238.

This sequence belongs to the DXR family. It depends on Mg(2+) as a cofactor. Mn(2+) is required as a cofactor.

The catalysed reaction is 2-C-methyl-D-erythritol 4-phosphate + NADP(+) = 1-deoxy-D-xylulose 5-phosphate + NADPH + H(+). Its pathway is isoprenoid biosynthesis; isopentenyl diphosphate biosynthesis via DXP pathway; isopentenyl diphosphate from 1-deoxy-D-xylulose 5-phosphate: step 1/6. Functionally, catalyzes the NADPH-dependent rearrangement and reduction of 1-deoxy-D-xylulose-5-phosphate (DXP) to 2-C-methyl-D-erythritol 4-phosphate (MEP). This is 1-deoxy-D-xylulose 5-phosphate reductoisomerase from Corynebacterium jeikeium (strain K411).